A 1012-amino-acid chain; its full sequence is DNA polymerase gamma (1012 aa).

Belongs to the DNA polymerase type-A family. Requires Mg(2+) as cofactor.

It is found in the mitochondrion. It carries out the reaction DNA(n) + a 2'-deoxyribonucleoside 5'-triphosphate = DNA(n+1) + diphosphate. Its function is as follows. Involved in the replication of mitochondrial DNA. The protein is DNA polymerase gamma (MIP1) of Komagataella pastoris (Yeast).